The following is a 459-amino-acid chain: Zinc finger transcription factor lin-29 (459 aa).

The span at 1–14 (MDQTVLDSAFNSPV) shows a compositional bias: polar residues. The disordered stretch occupies residues 1–73 (MDQTVLDSAF…GSTGSTPAHH (73 aa)). Residues 16-56 (SGIAGTTTGSGSTTHFGVGTNFKVSVRSSSRSTDGTDSTDG) show a composition bias toward low complexity. Residues 57-73 (ANSDNVTGSTGSTPAHH) show a composition bias toward polar residues. 5 C2H2-type zinc fingers span residues 151 to 173 (YKCTQCVKAFANSSYLSQHMRIH), 180 to 202 (GPCNYCGKKFTQLSHLQQHIRTH), 208 to 232 (YKCKFTGCDKAFSQLSNLQSHSRCH), 238 to 260 (FKCNSCYKCFTDEQSLLDHIPKH), and 269 to 291 (HICPFCGKSYTQQTYLQKHMTKH). The segment at 390–406 (PGFNMITPLENIQRYNG) is interacts with mab-10. Residues 423–444 (VSSTPSSTSSSSAGSSSSQGGV) show a composition bias toward low complexity. Residues 423-459 (VSSTPSSTSSSSAGSSSSQGGVFNPQSLINNMKNHSY) form a disordered region. Positions 446 to 459 (NPQSLINNMKNHSY) are enriched in polar residues.

In terms of assembly, interacts (via C-terminus) with transcription cofactor mab-10. In terms of tissue distribution, expressed in lateral hypodermal seam cells (at protein level).

It localises to the nucleus. In terms of biological role, transcription factor which regulates the expression of various genes, including those involved in cuticle synthesis and maintenance, such as collagens, and in lipid metabolism. Binds to promoter regions of genes, at 5'-[(T/G)TTTTTT(A/T/C/G)]-3' consensus sequences. Heterochronic protein which controls the choice of stage specific cell fates, including at the juvenile to adult transition. Promotes differentiation, together with transcriptional cofactor mab-10, perhaps as part of a transcriptional complex. Required for vulval morphogenesis and egg laying; perhaps by acting in a subset of the lateral seam cells. Involved in the exit of seam cells from the cell cycle. Required for specification of uterine pi-cell fate, acting upstream of lin-12 Notch signaling, perhaps via maintenance of lag-2 expression in the anchor cell (AC). Involved in morphogenesis of the specialized male tail used in mating. Acts cell non-autonomously from the hypodermis to regulate expression of genes in the intestine, including genes involved in lipid metabolism. May regulate vitellogenesis via the mTORC2 signaling mediated pathway, independently of daf-16. May promote nuclear accumulation of mab-10 in seam cells post-transcriptionally. Dispensable for seam cell fusion. Functionally, required for seam cell fusion. The protein is Zinc finger transcription factor lin-29 of Caenorhabditis elegans.